Here is a 546-residue protein sequence, read N- to C-terminus: MATLPQKDPGYIVIDVNAGTPDKPDPRLPSMKQGFNRRWIGTNIDFVYVVYTPQGACTALDRAMEKCSPGTVRIVSGGHCYEDFVFDECVKAIINVTGLVESGYDDDRGYFVSSGDTNWGSFKTLFRDHGRVLPGGSCYSVGLGGHIVGGGDGILARLHGLPVDWLSGVEVVVKPVLTEDSVLKYVHKDSEGDDGDLFWAHTGGGGGNFGIITKYYFKDLPMSPRGVIASNLHFSWDGFTRDALQDLLTKYFKLARCDWKNTVGKFQIFHQAAEEFVMYLYTSYSNDAEREVAQDRHYHLEADIEQIYKTCEPTKALGGHAGWAPFPVRPRKRHTSKTSYIHDETMDYPFYALTETINGSGPNQRGKYKSAYMIKDFPDLQIDVIWKYLTEVPDGLTSAEMKDALLQVDMFGGEIHNVAWDATAVAQRKYIIKLQYQTYWQEEDKDAVNLKWIRDFYEEMYEPYGGVPDPNTQVESGKGVFEGCYFNYPDVDLNNWKNGKYGALELYFLGNLNRLIKAKKLWDPNEIFTNKQSIPTKSLKEYKQTK.

The 183-residue stretch at 40-222 folds into the FAD-binding PCMH-type domain; that stretch reads IGTNIDFVYV…TKYYFKDLPM (183 aa). A cross-link (6-(S-cysteinyl)-8alpha-(pros-histidyl)-FAD (His-Cys)) is located at residues 79–138; the sequence is HCYEDFVFDECVKAIINVTGLVESGYDDDRGYFVSSGDTNWGSFKTLFRDHGRVLPGGSC. 2 N-linked (GlcNAc...) asparagine glycosylation sites follow: asparagine 95 and asparagine 358.

This sequence belongs to the oxygen-dependent FAD-linked oxidoreductase family. As to quaternary structure, homodimer. FAD serves as cofactor. In terms of processing, cleaved into 40 kDa and 29 kDa cleavage products, but the 2 polypeptide chains do not separate and seem to be physically linked together. Post-translationally, the FAD cofactor is bound via a bicovalent 6-S-cysteinyl, 8alpha-N1-histidyl FAD linkage.

It catalyses the reaction beta-D-glucose + O2 = D-glucono-1,5-lactone + H2O2. It carries out the reaction D-galactose + O2 = D-galactono-1,5-lactone + H2O2. The catalysed reaction is D-maltose + O2 = D-maltobiono-1,5-lactone + H2O2. The enzyme catalyses D-cellobiose + O2 = D-cellobiono-1,5-lactone + H2O2. It catalyses the reaction beta-lactose + O2 = lactobiono-1,5-lactone + H2O2. Functionally, catalyzes the selective oxidation of C1 hydroxyl moieties on mono- and disaccharides with concomitant reduction of molecular oxygen to hydrogen peroxide. This results in the formation of the corresponding lactones, which typically undergo spontaneous hydrolysis. Hexose oxidase is able to oxidize a variety of substrates including D-glucose, D-galactose, maltose, cellobiose, and lactose. The polypeptide is Hexose oxidase (HOX) (Chondrus crispus (Carrageen Irish moss)).